Here is a 679-residue protein sequence, read N- to C-terminus: Methionine--tRNA ligase (679 aa).

Residues 15–25 carry the 'HIGH' region motif; the sequence is PYANGPIHLGH. 4 residues coordinate Zn(2+): Cys-146, Cys-149, Cys-159, and Cys-162. A 'KMSKS' region motif is present at residues 332 to 336; the sequence is KMSKS. Lys-335 contacts ATP. The region spanning 578 to 679 is the tRNA-binding domain; it reads DFAKIDLRIA…EGAQPGMKVK (102 aa).

It belongs to the class-I aminoacyl-tRNA synthetase family. MetG type 1 subfamily. As to quaternary structure, homodimer. Zn(2+) serves as cofactor.

The protein localises to the cytoplasm. It carries out the reaction tRNA(Met) + L-methionine + ATP = L-methionyl-tRNA(Met) + AMP + diphosphate. In terms of biological role, is required not only for elongation of protein synthesis but also for the initiation of all mRNA translation through initiator tRNA(fMet) aminoacylation. This is Methionine--tRNA ligase from Shewanella pealeana (strain ATCC 700345 / ANG-SQ1).